The sequence spans 178 residues: Large ribosomal subunit protein uL6 (178 aa).

It belongs to the universal ribosomal protein uL6 family. As to quaternary structure, part of the 50S ribosomal subunit.

In terms of biological role, this protein binds to the 23S rRNA, and is important in its secondary structure. It is located near the subunit interface in the base of the L7/L12 stalk, and near the tRNA binding site of the peptidyltransferase center. This Leifsonia xyli subsp. xyli (strain CTCB07) protein is Large ribosomal subunit protein uL6.